Here is a 1175-residue protein sequence, read N- to C-terminus: Solute carrier family 9 member C1 (1175 aa).

At 1–39 (MEMEEISENLTASHSIKLTNMWLELLKSVFLSTPQDLPE) the chain is on the extracellular side. A helical membrane pass occupies residues 40 to 59 (IILILSLICTVGAFLNMHLK). Over 60–64 (DFPIP) the chain is Cytoplasmic. A helical transmembrane segment spans residues 65–82 (LPVILFLIGCCFEILSFA). Topologically, residues 83-98 (STQIQIYADAIQWMDP) are extracellular. A helical membrane pass occupies residues 99–115 (DIFFGIFTPVIIFNVAF). The Cytoplasmic segment spans residues 116–125 (DMDIYMLQKL). Residues 126 to 151 (FWQILVITIPGFLINYTLILWYLQSV) form a helical membrane-spanning segment. The interval 126–213 (FWQILVITIP…SLVIYSGVVH (88 aa)) is transport core domain. Over 152–157 (NKLSLK) the chain is Extracellular. The helical transmembrane segment at 158 to 183 (TVPWLLFSAVLISSDPMLTSASIRDL) threads the bilayer. Topologically, residues 184–186 (GLS) are cytoplasmic. A helical transmembrane segment spans residues 187 to 212 (RSLTNLINGESLLTSVLSLVIYSGVV). Residues 213-225 (HIRFKSKSVNHTL) lie on the Extracellular side of the membrane. The helical transmembrane segment at 226–257 (AHKVMSTAWSYIVESFITGIVFTKVIQLWMAT) threads the bilayer. Residues 258 to 261 (IFGD) lie on the Cytoplasmic side of the membrane. Residues 262-283 (DVNHITLIFSVLYLIFYVCELV) traverse the membrane as a helical segment. The Extracellular segment spans residues 284-286 (GMS). The helical transmembrane segment at 287–300 (GIFTLATIGLFLNS) threads the bilayer. Residues 301–307 (TSFKPGV) lie on the Cytoplasmic side of the membrane. A helical membrane pass occupies residues 308 to 339 (EAFLLEFWNCLSFIGFLMVFTFIGLLIPAHTY). Over 340-344 (LHISF) the chain is Extracellular. The helical transmembrane segment at 345–374 (SDVYYSLNIYFTLIVLRLLVFLLMSPILSR) threads the bilayer. The transport core domain stretch occupies residues 345–446 (SDVYYSLNIY…FILPMAVTKL (102 aa)). The Cytoplasmic segment spans residues 375 to 380 (LGHGFS). Residues 381–411 (WRWAFIMVWSEMKGTPNINMALLLAYSDISL) form a helical membrane-spanning segment. Residues 412-415 (GSER) are Extracellular-facing. A helical transmembrane segment spans residues 416-446 (ERSQILFHGVSVCVITLIVNRFILPMAVTKL). At 447–632 (GLRDVTSTKY…ACHRIVFTNE (186 aa)) the chain is on the cytoplasmic side. The ion transport-like stretch occupies residues 618–698 (YMFLHACHRI…EFFSHTWLLF (81 aa)). Residues 633-653 (FEYTGYLVVLMSTYPMIICWI) form a helical membrane-spanning segment. At 654–657 (SRLK) the chain is on the extracellular side. A helical transmembrane segment spans residues 658–684 (DIYDNEIKCANYYFLAFYILEALLKVA). Over 685-691 (AMRKEFF) the chain is Cytoplasmic. Residues 692–716 (SHTWLLFELGITLVGVLDIILIETD) traverse the membrane as a helical segment. The Extracellular segment spans residues 717-724 (SISYNFDL). The chain crosses the membrane as a helical span at residues 725-751 (TETVVFMNVIRLLRILRILKLVTPKLL). Residues 752 to 1175 (QIIDKRMSQQ…EELIEENINI (424 aa)) are Cytoplasmic-facing. Positions 1137–1146 (MKPDSERESF) are enriched in basic and acidic residues. The disordered stretch occupies residues 1137-1175 (MKPDSERESFETLDETSEEDNGKKENQENEELIEENINI). Positions 1164–1175 (ENEELIEENINI) are enriched in acidic residues.

The protein belongs to the monovalent cation:proton antiporter 1 (CPA1) transporter (TC 2.A.36) family. Interacts with soluble adenylyl cyclase (sAC). In terms of tissue distribution, testis-specific. Specifically present in the principal piece of sperm tail (at protein level).

The protein resides in the cell projection. It is found in the cilium. Its subcellular location is the flagellum membrane. Its function is as follows. Sperm-specific solute carrier involved in intracellular pH regulation of spermatozoa. Required for sperm motility and fertility. Involved in sperm cell hyperactivation, a step needed for sperm motility which is essential late in the preparation of sperm for fertilization. Required for the expression and bicarbonate regulation of the soluble adenylyl cyclase (sAC). This is Solute carrier family 9 member C1 (Slc9c1) from Mus musculus (Mouse).